The following is a 412-amino-acid chain: Serine hydroxymethyltransferase (412 aa).

(6S)-5,6,7,8-tetrahydrofolate is bound by residues Leu117 and 121 to 123 (GHL). Position 226 is an N6-(pyridoxal phosphate)lysine (Lys226).

The protein belongs to the SHMT family. As to quaternary structure, homodimer. Pyridoxal 5'-phosphate serves as cofactor.

Its subcellular location is the cytoplasm. It carries out the reaction (6R)-5,10-methylene-5,6,7,8-tetrahydrofolate + glycine + H2O = (6S)-5,6,7,8-tetrahydrofolate + L-serine. It participates in one-carbon metabolism; tetrahydrofolate interconversion. It functions in the pathway amino-acid biosynthesis; glycine biosynthesis; glycine from L-serine: step 1/1. In terms of biological role, catalyzes the reversible interconversion of serine and glycine with tetrahydrofolate (THF) serving as the one-carbon carrier. This reaction serves as the major source of one-carbon groups required for the biosynthesis of purines, thymidylate, methionine, and other important biomolecules. Also exhibits THF-independent aldolase activity toward beta-hydroxyamino acids, producing glycine and aldehydes, via a retro-aldol mechanism. This is Serine hydroxymethyltransferase from Natranaerobius thermophilus (strain ATCC BAA-1301 / DSM 18059 / JW/NM-WN-LF).